Here is a 386-residue protein sequence, read N- to C-terminus: Innexin unc-9 (386 aa).

Helical transmembrane passes span 33 to 53 (TAII…GFPI), 103 to 123 (QWVP…TIVW), 197 to 217 (FLYI…IFLL), and 282 to 302 (IFLF…CSLF).

Belongs to the pannexin family. Heterooligomer of unc-7 and unc-9. Interacts with F-actin. As to expression, expressed in PLM neurons (at protein level). Expressed in the nerve ring.

It localises to the cell membrane. It is found in the cell junction. Its subcellular location is the gap junction. Structural component of gap junctions. Plays a role in maintaining gap junction activity to promote locomotion. In Caenorhabditis elegans, this protein is Innexin unc-9.